Consider the following 260-residue polypeptide: Indole-3-glycerol phosphate synthase (260 aa).

It belongs to the TrpC family.

The catalysed reaction is 1-(2-carboxyphenylamino)-1-deoxy-D-ribulose 5-phosphate + H(+) = (1S,2R)-1-C-(indol-3-yl)glycerol 3-phosphate + CO2 + H2O. The protein operates within amino-acid biosynthesis; L-tryptophan biosynthesis; L-tryptophan from chorismate: step 4/5. This chain is Indole-3-glycerol phosphate synthase, found in Chloroherpeton thalassium (strain ATCC 35110 / GB-78).